The primary structure comprises 420 residues: Glucose-1-phosphate adenylyltransferase (420 aa).

Residues Tyr107, Gly173, 188 to 189, and Ser206 contribute to the alpha-D-glucose 1-phosphate site; that span reads EK.

The protein belongs to the bacterial/plant glucose-1-phosphate adenylyltransferase family. As to quaternary structure, homotetramer.

The catalysed reaction is alpha-D-glucose 1-phosphate + ATP + H(+) = ADP-alpha-D-glucose + diphosphate. Its pathway is glycan biosynthesis; glycogen biosynthesis. Its function is as follows. Involved in the biosynthesis of ADP-glucose, a building block required for the elongation reactions to produce glycogen. Catalyzes the reaction between ATP and alpha-D-glucose 1-phosphate (G1P) to produce pyrophosphate and ADP-Glc. This chain is Glucose-1-phosphate adenylyltransferase, found in Shewanella baltica (strain OS185).